Consider the following 118-residue polypeptide: DNA-binding protein SSO0352 (118 aa).

It belongs to the PDCD5 family.

The sequence is that of DNA-binding protein SSO0352 from Saccharolobus solfataricus (strain ATCC 35092 / DSM 1617 / JCM 11322 / P2) (Sulfolobus solfataricus).